We begin with the raw amino-acid sequence, 84 residues long: Small ribosomal subunit protein uS17 (84 aa).

It belongs to the universal ribosomal protein uS17 family. In terms of assembly, part of the 30S ribosomal subunit.

One of the primary rRNA binding proteins, it binds specifically to the 5'-end of 16S ribosomal RNA. This chain is Small ribosomal subunit protein uS17, found in Aliivibrio salmonicida (strain LFI1238) (Vibrio salmonicida (strain LFI1238)).